The sequence spans 146 residues: Large ribosomal subunit protein uL15 (146 aa).

The interval 1-39 is disordered; the sequence is MTLKLHNLRPAPGAKTAKTRVGRGEGSKGKTAGRGTKGT.

This sequence belongs to the universal ribosomal protein uL15 family. As to quaternary structure, part of the 50S ribosomal subunit.

Its function is as follows. Binds to the 23S rRNA. The protein is Large ribosomal subunit protein uL15 of Nocardioides sp. (strain ATCC BAA-499 / JS614).